The sequence spans 299 residues: ATP synthase gamma chain (299 aa).

The protein belongs to the ATPase gamma chain family. F-type ATPases have 2 components, CF(1) - the catalytic core - and CF(0) - the membrane proton channel. CF(1) has five subunits: alpha(3), beta(3), gamma(1), delta(1), epsilon(1). CF(0) has three main subunits: a, b and c.

It is found in the cell membrane. Functionally, produces ATP from ADP in the presence of a proton gradient across the membrane. The gamma chain is believed to be important in regulating ATPase activity and the flow of protons through the CF(0) complex. This chain is ATP synthase gamma chain, found in Clavibacter sepedonicus (Clavibacter michiganensis subsp. sepedonicus).